The primary structure comprises 393 residues: Acetate kinase (393 aa).

A Mg(2+)-binding site is contributed by asparagine 6. ATP is bound at residue lysine 13. Arginine 87 contacts substrate. Aspartate 143 serves as the catalytic Proton donor/acceptor. ATP-binding positions include histidine 203–glycine 207, aspartate 278–arginine 280, and glycine 326–asparagine 330. Glutamate 380 provides a ligand contact to Mg(2+).

This sequence belongs to the acetokinase family. As to quaternary structure, homodimer. Mg(2+) serves as cofactor. Requires Mn(2+) as cofactor.

The protein resides in the cytoplasm. It catalyses the reaction acetate + ATP = acetyl phosphate + ADP. It participates in metabolic intermediate biosynthesis; acetyl-CoA biosynthesis; acetyl-CoA from acetate: step 1/2. Its function is as follows. Catalyzes the formation of acetyl phosphate from acetate and ATP. Can also catalyze the reverse reaction. The protein is Acetate kinase of Mycoplasma capricolum subsp. capricolum (strain California kid / ATCC 27343 / NCTC 10154).